A 276-amino-acid polypeptide reads, in one-letter code: Plant cysteine oxidase 2 (276 aa).

Residues methionine 1–lysine 40 are disordered. Polar residues predominate over residues lysine 17 to arginine 28. A compositionally biased stretch (basic residues) spans asparagine 30–lysine 40. 3 residues coordinate Fe cation: histidine 134, histidine 136, and histidine 197.

It belongs to the cysteine dioxygenase family. Requires Fe(2+) as cofactor.

The protein resides in the nucleus. It localises to the cytoplasm. The enzyme catalyses L-cysteine + O2 = 3-sulfino-L-alanine + H(+). Functionally, catalyzes the oxidation of N-terminal cysteine residues (N-Cys), thus preparing the protein for N-end rule pathway-mediated proteasomal degradation, upstream of the N-end rule enzymes ATE1, ATE2 and PRT6. Controls the preparation of the group VII ethylene response factor (ERF-VII) proteins for degradation via the 26S proteasome N-end rule pathway. Acts as an oxygen sensor that controls the stability of ERF-VII proteins, which are stabilized in flooding-induced hypoxia, and regulate transcriptional adaptation to these adverse conditions. Not active on Cys located inside or at the C-terminus of a peptide. Acts redundantly with PCO1 to repress the anaerobic response. In Arabidopsis thaliana (Mouse-ear cress), this protein is Plant cysteine oxidase 2.